Reading from the N-terminus, the 543-residue chain is Hydroxylamine reductase (543 aa).

C5, C8, C17, and C23 together coordinate [4Fe-4S] cluster. Hybrid [4Fe-2O-2S] cluster is bound by residues H236, E260, C304, C398, C426, C451, E486, and K488. The residue at position 398 (C398) is a Cysteine persulfide.

Belongs to the HCP family. [4Fe-4S] cluster is required as a cofactor. It depends on hybrid [4Fe-2O-2S] cluster as a cofactor.

It localises to the cytoplasm. The catalysed reaction is A + NH4(+) + H2O = hydroxylamine + AH2 + H(+). Its function is as follows. Catalyzes the reduction of hydroxylamine to form NH(3) and H(2)O. In Bacteroides fragilis (strain YCH46), this protein is Hydroxylamine reductase.